The chain runs to 226 residues: 2,3-bisphosphoglycerate-dependent phosphoglycerate mutase (226 aa).

Substrate-binding positions include R8–N15, T21–G22, R58, E109–Y112, K120, R136–R137, and G180–N181. The Tele-phosphohistidine intermediate role is filled by H9. E109 acts as the Proton donor/acceptor in catalysis.

The protein belongs to the phosphoglycerate mutase family. BPG-dependent PGAM subfamily.

The enzyme catalyses (2R)-2-phosphoglycerate = (2R)-3-phosphoglycerate. The protein operates within carbohydrate degradation; glycolysis; pyruvate from D-glyceraldehyde 3-phosphate: step 3/5. Functionally, catalyzes the interconversion of 2-phosphoglycerate and 3-phosphoglycerate. The polypeptide is 2,3-bisphosphoglycerate-dependent phosphoglycerate mutase (Chlamydia trachomatis serovar A (strain ATCC VR-571B / DSM 19440 / HAR-13)).